The following is a 377-amino-acid chain: Chaperone protein DnaJ (377 aa).

Residues 5 to 69 (EFYDRLGVSK…QKRSAYDQYG (65 aa)) form the J domain. A CR-type zinc finger spans residues 133–215 (GVEKDVSYHR…CHGTGHEKET (83 aa)). The Zn(2+) site is built by cysteine 146, cysteine 149, cysteine 163, cysteine 166, cysteine 189, cysteine 192, cysteine 203, and cysteine 206. CXXCXGXG motif repeat units lie at residues 146 to 153 (CHTCAGSG), 163 to 170 (CGRCHGSG), 189 to 196 (CDVCHGSG), and 203 to 210 (CQTCHGTG).

This sequence belongs to the DnaJ family. In terms of assembly, homodimer. Zn(2+) is required as a cofactor.

It is found in the cytoplasm. Participates actively in the response to hyperosmotic and heat shock by preventing the aggregation of stress-denatured proteins and by disaggregating proteins, also in an autonomous, DnaK-independent fashion. Unfolded proteins bind initially to DnaJ; upon interaction with the DnaJ-bound protein, DnaK hydrolyzes its bound ATP, resulting in the formation of a stable complex. GrpE releases ADP from DnaK; ATP binding to DnaK triggers the release of the substrate protein, thus completing the reaction cycle. Several rounds of ATP-dependent interactions between DnaJ, DnaK and GrpE are required for fully efficient folding. Also involved, together with DnaK and GrpE, in the DNA replication of plasmids through activation of initiation proteins. The chain is Chaperone protein DnaJ from Streptococcus uberis (strain ATCC BAA-854 / 0140J).